Reading from the N-terminus, the 77-residue chain is Apelin (77 aa).

Residues 1 to 22 (MNLSFCVQALLLLWLSLTAVCG) form the signal peptide. Residues 23-41 (VPLMLPPDGKGLEEGNMRY) constitute a propeptide that is removed on maturation. Positions 45–77 (PRTSRTGPGAWQGGRRKFRRQRPRLSHKGPMPF) are disordered. Residues 58–71 (GRRKFRRQRPRLSH) are compositionally biased toward basic residues.

This sequence belongs to the apelin family. Post-translationally, several active peptides may be produced by proteolytic processing of the peptide precursor. In terms of tissue distribution, expressed in the lung, testis, ovary, uterus and mammary gland. Expressed in neurons in the thalamic paraventricular and hypothalamic supraoptic nuclei. The lung, testis and uterus mainly contain a large form that looks like apelin-36, whereas the mammary gland seems to contain 2 forms of apelin, a large form close to apelin-36 and a small form close to apelin-13 (at protein level). Widely expressed in the adult, with highest levels in the mammary gland of lactating animals, very high levels in the lung, intermediate levels in the spinal cord, ovary, adipose tissue, brain (neuronal cell bodies and fibers in the supraoptic and the paraventricular nuclei), heart and testis, and lowest levels in the pituitary gland, kidney, stomach, uterus and pancreas.

It is found in the secreted. Its subcellular location is the extracellular space. Functionally, peptide hormone that functions as endogenous ligand for the G-protein-coupled apelin receptor (APLNR/APJ), that plays a role in cadiovascular homeostasis. Functions as a balanced agonist activating both G(i) protein pathway and beta-arrestin pathway of APLNR. Downstream G proteins activation, apelin can inhibit cAMP production and activate key intracellular effectors such as ERKs. On the other hand, APLNR activation induces beta-arrestin recruitment to the membrane leading to desensitization and internalization of the receptor. Apelin blunts cardiac hypertrophic induction from APLNR on response to pathological stimuli, but also induces myocardial hypertrophy under normal conditions. Apelin-36 dissociates more hardly than (pyroglu)apelin-13 from APLNR. Involved in the regulation of cardiac precursor cell movements during gastrulation and heart morphogenesis. Has an inhibitory effect on cytokine production in response to T-cell receptor/CD3 cross-linking; the oral intake of apelin in the colostrum and the milk might therefore modulate immune responses in neonates. Plays a role in early coronary blood vessels formation. Mediates myocardial contractility in an ERK1/2-dependent manner. May also have a role in the central control of body fluid homeostasis by influencing vasopressin release and drinking behavior. The chain is Apelin from Rattus norvegicus (Rat).